The primary structure comprises 472 residues: Adenosylhomocysteinase (472 aa).

Substrate contacts are provided by T61, D139, and E198. 199–201 is an NAD(+) binding site; sequence TTT. Substrate is bound by residues K228 and D232. NAD(+) contacts are provided by residues N233, 262–267, E285, N320, 341–343, and N386; these read GFGDVG and IGH.

It belongs to the adenosylhomocysteinase family. The cofactor is NAD(+).

It localises to the cytoplasm. The catalysed reaction is S-adenosyl-L-homocysteine + H2O = L-homocysteine + adenosine. It participates in amino-acid biosynthesis; L-homocysteine biosynthesis; L-homocysteine from S-adenosyl-L-homocysteine: step 1/1. May play a key role in the regulation of the intracellular concentration of adenosylhomocysteine. This Sphingopyxis alaskensis (strain DSM 13593 / LMG 18877 / RB2256) (Sphingomonas alaskensis) protein is Adenosylhomocysteinase.